The chain runs to 240 residues: VSFNYTEFKDDGSLILQGDAKIWTDGRLAMPTDPLVNNPKTTRSAGRALYATPVPIWDSATGNVASFVTSFNFLFVIRELKYTPTDGLVFFLAPVGTEIPSGSTGGFLGIFDGSNGFNQFVAVEFDSYHNIWDPKSLRSSHVGIDVNSIMSLKAVNWNRVSGSLEKATIIYDSQTNILSVVMTSQNGQITTIYGTIDLKTVLPEKVSVGFSATTGNPEREKHDIYSWSFTSTLKEPEEQA.

N-linked (GlcNAc...) asparagine glycosylation is present at Asn-4. Mn(2+) contacts are provided by Glu-124 and Asp-126. The Ca(2+) site is built by Asp-126, Tyr-128, Asn-130, and Asp-133. Mn(2+)-binding residues include Asp-133 and His-141.

Belongs to the leguminous lectin family.

In terms of biological role, L-fucose specific lectin. The sequence is that of Anti-H(O) lectin from Lotus tetragonolobus (Winged pea).